The following is a 303-amino-acid chain: Mevalonate kinase (303 aa).

An ATP-binding site is contributed by 90 to 100; the sequence is PAGSGLGSSAA. Asp141 acts as the Proton acceptor in catalysis.

The protein belongs to the GHMP kinase family. Mevalonate kinase subfamily. As to quaternary structure, homodimer. Mg(2+) serves as cofactor.

It is found in the cytoplasm. The catalysed reaction is (R)-mevalonate + ATP = (R)-5-phosphomevalonate + ADP + H(+). It functions in the pathway isoprenoid biosynthesis; isopentenyl diphosphate biosynthesis via mevalonate pathway; isopentenyl diphosphate from (R)-mevalonate: step 1/3. Its function is as follows. Catalyzes the phosphorylation of (R)-mevalonate (MVA) to (R)-mevalonate 5-phosphate (MVAP). Functions in the mevalonate (MVA) pathway leading to isopentenyl diphosphate (IPP), a key precursor for the biosynthesis of isoprenoid compounds such as archaeal membrane lipids. The protein is Mevalonate kinase of Methanothermobacter thermautotrophicus (strain ATCC 29096 / DSM 1053 / JCM 10044 / NBRC 100330 / Delta H) (Methanobacterium thermoautotrophicum).